Here is a 189-residue protein sequence, read N- to C-terminus: MVKVIASSLRKGNVVDKDGKLYVILFAENIHPGKGTPVTQLDMRRIGDGVKVSERYRTTEQVERAYVEEREHTFLYADGEGFHFMNPETYDQVAVSEAVVGDAAPYLQEGMPVQVSQFNGIAISLVLPQRATFEVVETEPTTKGQTASSSYKPAVLSNGVRTAVPPHIAPGTRVVVMTADGSYVERAKD.

Belongs to the elongation factor P family.

It localises to the cytoplasm. The protein operates within protein biosynthesis; polypeptide chain elongation. Its function is as follows. Involved in peptide bond synthesis. Stimulates efficient translation and peptide-bond synthesis on native or reconstituted 70S ribosomes in vitro. Probably functions indirectly by altering the affinity of the ribosome for aminoacyl-tRNA, thus increasing their reactivity as acceptors for peptidyl transferase. The polypeptide is Elongation factor P 2 (Mesorhizobium japonicum (strain LMG 29417 / CECT 9101 / MAFF 303099) (Mesorhizobium loti (strain MAFF 303099))).